Reading from the N-terminus, the 300-residue chain is 1D-myo-inositol 2-acetamido-2-deoxy-alpha-D-glucopyranoside deacetylase (300 aa).

Positions 13, 16, and 147 each coordinate Zn(2+).

This sequence belongs to the MshB deacetylase family. Zn(2+) is required as a cofactor.

It catalyses the reaction 1D-myo-inositol 2-acetamido-2-deoxy-alpha-D-glucopyranoside + H2O = 1D-myo-inositol 2-amino-2-deoxy-alpha-D-glucopyranoside + acetate. Functionally, catalyzes the deacetylation of 1D-myo-inositol 2-acetamido-2-deoxy-alpha-D-glucopyranoside (GlcNAc-Ins) in the mycothiol biosynthesis pathway. The protein is 1D-myo-inositol 2-acetamido-2-deoxy-alpha-D-glucopyranoside deacetylase of Mycolicibacterium paratuberculosis (strain ATCC BAA-968 / K-10) (Mycobacterium paratuberculosis).